A 95-amino-acid chain; its full sequence is uncharacterized protein (95 aa).

Its function is as follows. The presence of the two linear plasmids, termed pGKL1 and pGKL2, in strains of Kluyveromyces lactis confers the killer phenotype to the host cell, by promoting the secretion of a toxin able to inhibit the growth of sensitive strains. This is an uncharacterized protein from Kluyveromyces lactis (strain ATCC 8585 / CBS 2359 / DSM 70799 / NBRC 1267 / NRRL Y-1140 / WM37) (Yeast).